Here is a 42-residue protein sequence, read N- to C-terminus: Protein YmiD (42 aa).

The protein is Protein YmiD of Escherichia coli (strain K12).